Reading from the N-terminus, the 321-residue chain is Electron transfer flavoprotein subunit alpha (321 aa).

Arg-211, Ser-236, Arg-237, Gln-250, Val-251, Ser-254, Gly-255, Ser-270, Ser-272, Gln-274, His-275, Asn-289, Asp-307, and Ile-308 together coordinate FAD.

Heterodimer of an alpha and a beta subunit. Forms a ternary complex with trimethylamine dehydrogenase. FAD serves as cofactor.

In terms of biological role, heterodimeric electron transfer flavoprotein that accepts electrons from trimethylamine dehydrogenase. It transfers the electrons to the main respiratory chain via ETF-ubiquinone oxidoreductase (ETF dehydrogenase). This is Electron transfer flavoprotein subunit alpha (etfA) from Methylophilus methylotrophus (Bacterium W3A1).